We begin with the raw amino-acid sequence, 91 residues long: Cell division topological specificity factor (91 aa).

The protein belongs to the MinE family.

Prevents the cell division inhibition by proteins MinC and MinD at internal division sites while permitting inhibition at polar sites. This ensures cell division at the proper site by restricting the formation of a division septum at the midpoint of the long axis of the cell. The chain is Cell division topological specificity factor from Chloroflexus aggregans (strain MD-66 / DSM 9485).